The chain runs to 283 residues: 2-dehydro-3-deoxyphosphooctonate aldolase (283 aa).

This sequence belongs to the KdsA family.

It is found in the cytoplasm. The enzyme catalyses D-arabinose 5-phosphate + phosphoenolpyruvate + H2O = 3-deoxy-alpha-D-manno-2-octulosonate-8-phosphate + phosphate. It functions in the pathway carbohydrate biosynthesis; 3-deoxy-D-manno-octulosonate biosynthesis; 3-deoxy-D-manno-octulosonate from D-ribulose 5-phosphate: step 2/3. Its pathway is bacterial outer membrane biogenesis; lipopolysaccharide biosynthesis. This is 2-dehydro-3-deoxyphosphooctonate aldolase from Vibrio cholerae serotype O1 (strain ATCC 39315 / El Tor Inaba N16961).